The following is an 837-amino-acid chain: Protein translocase subunit SecA (837 aa).

ATP contacts are provided by residues glutamine 85, 103–107, and aspartate 493; that span reads GEGKT. Residues cysteine 821, cysteine 823, cysteine 832, and histidine 833 each contribute to the Zn(2+) site.

This sequence belongs to the SecA family. As to quaternary structure, monomer and homodimer. Part of the essential Sec protein translocation apparatus which comprises SecA, SecYEG and auxiliary proteins SecDF. Other proteins may also be involved. The cofactor is Zn(2+).

Its subcellular location is the cell membrane. It localises to the cytoplasm. The catalysed reaction is ATP + H2O + cellular proteinSide 1 = ADP + phosphate + cellular proteinSide 2.. Part of the Sec protein translocase complex. Interacts with the SecYEG preprotein conducting channel. Has a central role in coupling the hydrolysis of ATP to the transfer of proteins into and across the cell membrane, serving as an ATP-driven molecular motor driving the stepwise translocation of polypeptide chains across the membrane. The sequence is that of Protein translocase subunit SecA from Streptococcus pneumoniae (strain ATCC BAA-255 / R6).